A 200-amino-acid chain; its full sequence is LHFPL tetraspan subfamily member 6 protein (200 aa).

The N-terminal stretch at 1-21 (MASSLTCAGVIWALLSFLCAA) is a signal peptide. 2 helical membrane passes run 84–104 (ICTVVTGIGCGLLLLVALTAI) and 123–143 (GIQFVGGLLIGSGCALYPLGW). The N-linked (GlcNAc...) asparagine glycan is linked to Asn154. Residues 172–192 (CTGAGAAAAMVLCTWMACFAG) traverse the membrane as a helical segment.

The protein belongs to the LHFP family.

The protein resides in the membrane. This is LHFPL tetraspan subfamily member 6 protein from Danio rerio (Zebrafish).